A 292-amino-acid chain; its full sequence is Probable septum site-determining protein MinC (292 aa).

The interval 112–188 (DTAPPNDVAT…PQSSSALVIT (77 aa)) is disordered. Positions 128–137 (EATAEAAAKA) are enriched in low complexity. A compositionally biased stretch (acidic residues) spans 140–150 (QDDEAYGEQAD). Positions 171-185 (ANRPTATPPQSSSAL) are enriched in polar residues.

This sequence belongs to the MinC family. Interacts with MinD and FtsZ.

In terms of biological role, cell division inhibitor that blocks the formation of polar Z ring septums. Rapidly oscillates between the poles of the cell to destabilize FtsZ filaments that have formed before they mature into polar Z rings. Prevents FtsZ polymerization. The polypeptide is Probable septum site-determining protein MinC (Bordetella bronchiseptica (strain ATCC BAA-588 / NCTC 13252 / RB50) (Alcaligenes bronchisepticus)).